Here is a 222-residue protein sequence, read N- to C-terminus: Collectrin (222 aa).

An N-terminal signal peptide occupies residues 1–14; it reads MLWLLFFLVTAIHA. Residues 15-141 lie on the Extracellular side of the membrane; the sequence is DLCRPDAENA…LAPPTDPSVP (127 aa). One can recognise a Collectrin-like domain in the interval 21–222; that stretch reads AENAFKVRLS…VTEDERLTPL (202 aa). 2 N-linked (GlcNAc...) asparagine glycosylation sites follow: Asn-76 and Asn-93. The chain crosses the membrane as a helical span at residues 142–162; that stretch reads IWIIIFGVIFCIVLVATMLLI. Topologically, residues 163 to 222 are cytoplasmic; that stretch reads ISGIRQHRRKNKGPSEMEDSEDKCENVITIENGIPCDPLDMKGGHINDAFVTEDERLTPL. 2 positions are modified to phosphothreonine: Thr-214 and Thr-220.

This sequence belongs to the CLTRN family. As to quaternary structure, monomer. Homodimer; dimerization prevents CLTRN cleavage by BACE2. Interacts with SLC6A18; this interaction regulates the trafficking of SLC6A18 to the cell membrane and its amino acid transporter activity. Interacts with SLC6A19; this interaction regulates the trafficking of SLC6A19 to the cell membrane and its amino acid transporter activity. Interacts with SNAPIN. Glycosylated. Glycosylation is required for plasma membrane localization and for its cleavage by BACE2. Post-translationally, proteolytically processed in pancreatic beta cells by BACE2 leading to the generation and extracellular release of soluble CLTRN, and a corresponding cell-associated C-terminal fragment which is later cleaved by gamma-secretase. This shedding process inactivates CLTRN. Three cleavage sites have been identified for BACE2, two clustered sites after Phe-116 and Leu-118 and a more membrane proximal site at Phe-125; the preferred BACE2 cleavage site seems to be between Phe-125 and Leu-126, Phe-116 and Leu-118 act as alternative sites.

The protein localises to the cell membrane. Its function is as follows. Plays an important role in amino acid transport by acting as binding partner of amino acid transporters SLC6A18 and SLC6A19, regulating their trafficking on the cell surface and their activity. May also play a role in trafficking of amino acid transporters SLC3A1 and SLC7A9 to the renal cortical cell membrane. Regulator of SNARE complex function. Stimulator of beta cell replication. The protein is Collectrin (CLTRN) of Bos taurus (Bovine).